A 508-amino-acid polypeptide reads, in one-letter code: Photosystem II CP47 reaction center protein (508 aa).

A run of 6 helical transmembrane segments spans residues 21–36 (SVHI…WAGS), 101–115 (IVFS…IWHW), 140–156 (GIHL…FGAF), 203–218 (IAAG…FHLS), 237–252 (VLSS…AFVV), and 457–472 (SFAL…HGSR).

Belongs to the PsbB/PsbC family. PsbB subfamily. In terms of assembly, PSII is composed of 1 copy each of membrane proteins PsbA, PsbB, PsbC, PsbD, PsbE, PsbF, PsbH, PsbI, PsbJ, PsbK, PsbL, PsbM, PsbT, PsbX, PsbY, PsbZ, Psb30/Ycf12, at least 3 peripheral proteins of the oxygen-evolving complex and a large number of cofactors. It forms dimeric complexes. Binds multiple chlorophylls. PSII binds additional chlorophylls, carotenoids and specific lipids. is required as a cofactor.

The protein resides in the plastid. It localises to the chloroplast thylakoid membrane. In terms of biological role, one of the components of the core complex of photosystem II (PSII). It binds chlorophyll and helps catalyze the primary light-induced photochemical processes of PSII. PSII is a light-driven water:plastoquinone oxidoreductase, using light energy to abstract electrons from H(2)O, generating O(2) and a proton gradient subsequently used for ATP formation. The polypeptide is Photosystem II CP47 reaction center protein (Capsella bursa-pastoris (Shepherd's purse)).